The chain runs to 274 residues: Thiazole synthase (274 aa).

Lys115 (schiff-base intermediate with DXP) is an active-site residue. 1-deoxy-D-xylulose 5-phosphate-binding positions include Gly176, 202–203 (AG), and 224–225 (NS).

This sequence belongs to the ThiG family. As to quaternary structure, homotetramer. Forms heterodimers with either ThiH or ThiS.

Its subcellular location is the cytoplasm. It carries out the reaction [ThiS sulfur-carrier protein]-C-terminal-Gly-aminoethanethioate + 2-iminoacetate + 1-deoxy-D-xylulose 5-phosphate = [ThiS sulfur-carrier protein]-C-terminal Gly-Gly + 2-[(2R,5Z)-2-carboxy-4-methylthiazol-5(2H)-ylidene]ethyl phosphate + 2 H2O + H(+). It functions in the pathway cofactor biosynthesis; thiamine diphosphate biosynthesis. Catalyzes the rearrangement of 1-deoxy-D-xylulose 5-phosphate (DXP) to produce the thiazole phosphate moiety of thiamine. Sulfur is provided by the thiocarboxylate moiety of the carrier protein ThiS. In vitro, sulfur can be provided by H(2)S. The protein is Thiazole synthase of Psychrobacter cryohalolentis (strain ATCC BAA-1226 / DSM 17306 / VKM B-2378 / K5).